Consider the following 955-residue polypeptide: Glutamyl aminopeptidase (955 aa).

Residues 1-17 (MDIEDKTSKMHCMKGKH) lie on the Cytoplasmic side of the membrane. Residues 18–38 (VVIICGVVIAVGLILGLGLGL) traverse the membrane as a helical; Signal-anchor for type II membrane protein segment. The Extracellular segment spans residues 39-955 (GLDTKACNPP…LENSEHSNFA (917 aa)). 2 N-linked (GlcNAc...) asparagine glycosylation sites follow: Asn118 and Asn192. Substrate is bound at residue Glu218. Asn319 and Asn335 each carry an N-linked (GlcNAc...) asparagine glycan. A substrate-binding site is contributed by 352–356 (GAMEN). His388 serves as a coordination point for Zn(2+). Catalysis depends on Glu389, which acts as the Proton acceptor. Zn(2+) is bound by residues His392 and Glu411. N-linked (GlcNAc...) asparagine glycosylation is found at Asn458, Asn547, Asn584, Asn592, Asn674, Asn759, Asn823, and Asn836. Arg882 is a binding site for substrate.

It belongs to the peptidase M1 family. Homodimer; disulfide-linked. The cofactor is Zn(2+). Post-translationally, N-glycosylated. Glycosylation counts for an increased mass of about 32% of the protein mass (about 48 kDa).

The protein resides in the cell membrane. It catalyses the reaction Release of N-terminal glutamate (and to a lesser extent aspartate) from a peptide.. Substrate specificity is modulated by calcium which enhances the enzymatic activity for cleavage of acidic residues while reducing its activity with neutral and basic residues. Hydrolytic activity is inhibited by the aminopeptidase inhibitor (Leu and acidic inhibitor) amastatin, but not by bestatin (aminopeptidase inhibitor Leu inhibitor), leupeptin, pepstatin A and PMSF. Its hydrolytic activity is also strongly reduced by zinc ions, with a complete inhibition at 0.5 mM, and moderately inhibited by cobalt and copper ions. Functionally, venom protein that cleaves N-terminal acidic residues from peptides with high potency in presence of calcium. It may have several roles in venom including alteration of blood pressure by cleaving circulating angiotensin-2, general degradation of host tissue, increase of permeability to other venom components, and/or processing of other toxins in the venom. This Bitis rhinoceros (West African gaboon viper) protein is Glutamyl aminopeptidase.